The chain runs to 137 residues: Ubiquitin-conjugating enzyme variant MMS2 (137 aa).

Residues 5–137 enclose the UBC core domain; the sequence is PRNFRLLEEL…LRQPKEGETF (133 aa). The residue at position 71 (S71) is a Phosphoserine.

It belongs to the ubiquitin-conjugating enzyme family. In terms of assembly, heterodimer with UBC13.

In terms of biological role, has a role in the DNA error-free postreplication repair (PRR) pathway. Lacks catalytic activity by itself. The UBC13/MMS2 heterodimer catalyzes the synthesis of non-canonical poly-ubiquitin chains that are linked through 'Lys-63'. In Saccharomyces cerevisiae (strain ATCC 204508 / S288c) (Baker's yeast), this protein is Ubiquitin-conjugating enzyme variant MMS2 (MMS2).